Here is a 487-residue protein sequence, read N- to C-terminus: Protein DETOXIFICATION 11 (487 aa).

12 helical membrane passes run 35–55 (LICF…LQII), 73–93 (FAIS…SCAL), 122–142 (LVCL…VILG), 151–171 (AGRF…LQPL), 184–204 (LLIT…LLVY), 211–231 (IGGA…LGSF), 264–284 (AAML…SGLL), 293–313 (VLSV…AIAA), 330–350 (AAHI…LMVG), 377–397 (MAPL…LSGV), 412–432 (FGAF…WVHL), and 435–455 (VGLW…LALV).

It belongs to the multi antimicrobial extrusion (MATE) (TC 2.A.66.1) family.

Its subcellular location is the membrane. The protein is Protein DETOXIFICATION 11 of Arabidopsis thaliana (Mouse-ear cress).